Here is a 274-residue protein sequence, read N- to C-terminus: MAAATSTMSLLPPITQQQRWHAADSLVVLASRCHNSRRRRRCRYVVPRARLFGPAIFEASKLKVLFLGVDEEKHQHPGKLPRTYTLTHSDVTARLTLAVSHTINRAQLQGWYNKLQRDEVVAEWKKVQGHMSLHVHCHISGGHVLLDLIAGLRYYIFRKELPVVLKAFVHGDGNLFSRHPELEEATVWVYFHSNLPRFNRVECWGPLRDAGAPPEEDDAVAAAAAEEAAAEQMPAAGEWPRRCPGQCDCCFPPYSLIPWPHQHDVAAADGQPQQ.

The N-terminal 48 residues, 1 to 48 (MAAATSTMSLLPPITQQQRWHAADSLVVLASRCHNSRRRRRCRYVVPR), are a transit peptide targeting the chloroplast.

The protein belongs to the staygreen family. In terms of assembly, interacts with LHCII complex. In terms of tissue distribution, expressed in leaves, roots and developing seeds.

It localises to the plastid. Its subcellular location is the chloroplast membrane. The protein resides in the chloroplast stroma. Functionally, involved in the disassembling mechanism of the intact light-harvesting complex of photosystem II (LHCII) in the thylakoid membranes. Required to trigger chlorophyll degradation during natural and dark-induced leaf senescence. This chain is Protein STAY-GREEN, chloroplastic (SGR), found in Oryza sativa subsp. japonica (Rice).